The primary structure comprises 154 residues: Endoribonuclease YbeY (154 aa).

Zn(2+)-binding residues include His113, His117, and His123.

It belongs to the endoribonuclease YbeY family. Requires Zn(2+) as cofactor.

It localises to the cytoplasm. Functionally, single strand-specific metallo-endoribonuclease involved in late-stage 70S ribosome quality control and in maturation of the 3' terminus of the 16S rRNA. This chain is Endoribonuclease YbeY, found in Aeromonas salmonicida (strain A449).